A 208-amino-acid polypeptide reads, in one-letter code: Small ribosomal subunit protein uS4 (208 aa).

Residues 98-158 form the S4 RNA-binding domain; the sequence is RRLDNVVYRL…EKNRKISVVA (61 aa).

The protein belongs to the universal ribosomal protein uS4 family. Part of the 30S ribosomal subunit. Contacts protein S5. The interaction surface between S4 and S5 is involved in control of translational fidelity.

One of the primary rRNA binding proteins, it binds directly to 16S rRNA where it nucleates assembly of the body of the 30S subunit. Functionally, with S5 and S12 plays an important role in translational accuracy. The sequence is that of Small ribosomal subunit protein uS4 from Lawsonia intracellularis (strain PHE/MN1-00).